A 164-amino-acid polypeptide reads, in one-letter code: Photosystem II extrinsic protein V (164 aa).

Positions 1 to 27 (MIPNRKIQLSLFAVIIVFETLLNQVYA) are cleaved as a signal peptide. The heme c site is built by cysteine 64, cysteine 67, histidine 68, and methionine 131.

It belongs to the cytochrome c family. PsbV subfamily. PSII is composed of 1 copy each of membrane proteins PsbA, PsbB, PsbC, PsbD, PsbE, PsbF, PsbH, PsbI, PsbJ, PsbK, PsbL, PsbM, PsbT, PsbY, PsbZ, Psb30/Ycf12, at least 3 peripheral proteins of the oxygen-evolving complex and a large number of cofactors. It forms dimeric complexes. The extrinsic subunits in red algae are PsbO (OEC33), PsbQ', cytochrome c-550 and PsbU. The cofactor is heme c.

The protein resides in the plastid. Its subcellular location is the chloroplast thylakoid membrane. In terms of biological role, one of the extrinsic, lumenal subunits of photosystem II (PSII). PSII is a light-driven water plastoquinone oxidoreductase, using light energy to abstract electrons from H(2)O, generating a proton gradient subsequently used for ATP formation. The extrinsic proteins stabilize the structure of photosystem II oxygen-evolving complex (OEC), the ion environment of oxygen evolution and protect the OEC against heat-induced inactivation. In Gracilaria tenuistipitata var. liui (Red alga), this protein is Photosystem II extrinsic protein V.